The sequence spans 530 residues: Cytochrome P450 2U1 (530 aa).

The next 4 helical transmembrane spans lie at 21-41 (VRAT…GWVW), 99-119 (VYGN…LSDF), 247-267 (ICLH…YLPF), and 328-348 (LFYI…NSLL). Residue Cys-476 coordinates heme. A helical membrane pass occupies residues 481 to 501 (LAKMELFLMFVSLMQTFTFAL).

The protein belongs to the cytochrome P450 family. The cofactor is heme. Widely expressed. Expressed in heart, brain and liver.

The protein localises to the endoplasmic reticulum membrane. It localises to the microsome membrane. Its subcellular location is the mitochondrion inner membrane. It carries out the reaction an omega-methyl-long-chain fatty acid + reduced [NADPH--hemoprotein reductase] + O2 = an omega-hydroxy-long-chain fatty acid + oxidized [NADPH--hemoprotein reductase] + H2O + H(+). The enzyme catalyses (5Z,8Z,11Z,14Z)-eicosatetraenoate + reduced [NADPH--hemoprotein reductase] + O2 = 19-hydroxy-(5Z,8Z,11Z,14Z)-eicosatetraenoate + oxidized [NADPH--hemoprotein reductase] + H2O + H(+). The catalysed reaction is (5Z,8Z,11Z,14Z)-eicosatetraenoate + reduced [NADPH--hemoprotein reductase] + O2 = 20-hydroxy-(5Z,8Z,11Z,14Z)-eicosatetraenoate + oxidized [NADPH--hemoprotein reductase] + H2O + H(+). It catalyses the reaction N-[(5Z,8Z,11Z,14Z)-eicosatetraenoyl]-serotonin + reduced [NADPH--hemoprotein reductase] + O2 = 2-oxo-N-[(5Z,8Z,11Z,14Z)-eicosatetraenoyl]-serotonin + oxidized [NADPH--hemoprotein reductase] + H2O + H(+). Functionally, a cytochrome P450 monooxygenase involved in the metabolism of arachidonic acid and its conjugates. Mechanistically, uses molecular oxygen inserting one oxygen atom into a substrate, and reducing the second into a water molecule, with two electrons provided by NADPH via cytochrome P450 reductase (CPR; NADPH-ferrihemoprotein reductase). Acts as an omega and omega-1 hydroxylase for arachidonic acid and possibly for other long chain fatty acids. May modulate the arachidonic acid signaling pathway and play a role in other fatty acid signaling processes. May down-regulate the biological activities of N-arachidonoyl-serotonin, an endocannabinoid that has anti-nociceptive effects through inhibition of fatty acid amide hydrolase FAAH, TRPV1 receptor and T-type calcium channels. Catalyzes C-2 oxidation of the indole ring of N-arachidonoyl-serotonin forming a less active product 2-oxo-N-arachidonoyl-serotonin. This Mus musculus (Mouse) protein is Cytochrome P450 2U1.